Consider the following 256-residue polypeptide: Type III pantothenate kinase (256 aa).

Residue 6 to 13 coordinates ATP; sequence DCGNTNTV. 107-110 provides a ligand contact to substrate; the sequence is GPDR. The Proton acceptor role is filled by Asp109. Asp129 provides a ligand contact to K(+). Thr132 serves as a coordination point for ATP. Residue Thr184 coordinates substrate.

The protein belongs to the type III pantothenate kinase family. Homodimer. The cofactor is NH4(+). Requires K(+) as cofactor.

Its subcellular location is the cytoplasm. It catalyses the reaction (R)-pantothenate + ATP = (R)-4'-phosphopantothenate + ADP + H(+). The protein operates within cofactor biosynthesis; coenzyme A biosynthesis; CoA from (R)-pantothenate: step 1/5. Catalyzes the phosphorylation of pantothenate (Pan), the first step in CoA biosynthesis. This chain is Type III pantothenate kinase, found in Dinoroseobacter shibae (strain DSM 16493 / NCIMB 14021 / DFL 12).